Here is a 100-residue protein sequence, read N- to C-terminus: Urease subunit gamma (100 aa).

Belongs to the urease gamma subunit family. Heterotrimer of UreA (gamma), UreB (beta) and UreC (alpha) subunits. Three heterotrimers associate to form the active enzyme.

Its subcellular location is the cytoplasm. The catalysed reaction is urea + 2 H2O + H(+) = hydrogencarbonate + 2 NH4(+). Its pathway is nitrogen metabolism; urea degradation; CO(2) and NH(3) from urea (urease route): step 1/1. This Methylibium petroleiphilum (strain ATCC BAA-1232 / LMG 22953 / PM1) protein is Urease subunit gamma.